A 200-amino-acid polypeptide reads, in one-letter code: Ribosome maturation factor RimP (200 aa).

This sequence belongs to the RimP family.

The protein localises to the cytoplasm. In terms of biological role, required for maturation of 30S ribosomal subunits. In Polaromonas sp. (strain JS666 / ATCC BAA-500), this protein is Ribosome maturation factor RimP.